A 335-amino-acid chain; its full sequence is Glyceraldehyde-3-phosphate dehydrogenase 1 (335 aa).

NAD(+) is bound by residues 13-14 (TI) and G111. 140–142 (SCN) serves as a coordination point for D-glyceraldehyde 3-phosphate. C141 functions as the Nucleophile in the catalytic mechanism. R169 lines the NAD(+) pocket. D-glyceraldehyde 3-phosphate-binding positions include T171 and 195–196 (HG). Residue Q300 participates in NAD(+) binding.

Belongs to the glyceraldehyde-3-phosphate dehydrogenase family. In terms of assembly, homotetramer.

It localises to the cytoplasm. It catalyses the reaction D-glyceraldehyde 3-phosphate + phosphate + NADP(+) = (2R)-3-phospho-glyceroyl phosphate + NADPH + H(+). The catalysed reaction is D-glyceraldehyde 3-phosphate + phosphate + NAD(+) = (2R)-3-phospho-glyceroyl phosphate + NADH + H(+). It participates in carbohydrate degradation; glycolysis; pyruvate from D-glyceraldehyde 3-phosphate: step 1/5. This Methanosarcina acetivorans (strain ATCC 35395 / DSM 2834 / JCM 12185 / C2A) protein is Glyceraldehyde-3-phosphate dehydrogenase 1 (gapA).